A 290-amino-acid chain; its full sequence is uncharacterized protein (290 aa).

5 helical membrane passes run 10 to 27 (FFVA…LLLI), 32 to 54 (VNYI…YFFS), 69 to 91 (ILVP…GVLI), 100 to 117 (VLAG…FFYF), and 121 to 143 (YLLM…NFEY). The stretch at 147–183 (VGKERKRILKLKKNYHKLLKEFSNFEREKRMFSNLRK) forms a coiled coil.

Its subcellular location is the cell membrane. This is an uncharacterized protein from Aquifex aeolicus (strain VF5).